The chain runs to 160 residues: ATP synthase subunit b, chloroplastic (160 aa).

The chain crosses the membrane as a helical span at residues 12–31; it reads NVINIAILVVILIRFARQVV.

Belongs to the ATPase B chain family. F-type ATPases have 2 components, F(1) - the catalytic core - and F(0) - the membrane proton channel. F(1) has five subunits: alpha(3), beta(3), gamma(1), delta(1), epsilon(1). F(0) has four main subunits: a(1), b(1), b'(1) and c(10-14). The alpha and beta chains form an alternating ring which encloses part of the gamma chain. F(1) is attached to F(0) by a central stalk formed by the gamma and epsilon chains, while a peripheral stalk is formed by the delta, b and b' chains.

It is found in the plastid. The protein resides in the chloroplast thylakoid membrane. In terms of biological role, f(1)F(0) ATP synthase produces ATP from ADP in the presence of a proton or sodium gradient. F-type ATPases consist of two structural domains, F(1) containing the extramembraneous catalytic core and F(0) containing the membrane proton channel, linked together by a central stalk and a peripheral stalk. During catalysis, ATP synthesis in the catalytic domain of F(1) is coupled via a rotary mechanism of the central stalk subunits to proton translocation. Its function is as follows. Component of the F(0) channel, it forms part of the peripheral stalk, linking F(1) to F(0). This chain is ATP synthase subunit b, chloroplastic, found in Cyanidioschyzon merolae (strain NIES-3377 / 10D) (Unicellular red alga).